Here is a 309-residue protein sequence, read N- to C-terminus: Homoserine kinase (309 aa).

91-101 (PIGSGLGSSAC) is a binding site for ATP.

It belongs to the GHMP kinase family. Homoserine kinase subfamily.

It is found in the cytoplasm. The catalysed reaction is L-homoserine + ATP = O-phospho-L-homoserine + ADP + H(+). Its pathway is amino-acid biosynthesis; L-threonine biosynthesis; L-threonine from L-aspartate: step 4/5. Its function is as follows. Catalyzes the ATP-dependent phosphorylation of L-homoserine to L-homoserine phosphate. The chain is Homoserine kinase from Salmonella paratyphi B (strain ATCC BAA-1250 / SPB7).